The chain runs to 238 residues: C-type lectin domain family 4 member A (238 aa).

The Cytoplasmic portion of the chain corresponds to 1–48; it reads MASEITYAEVKFKNESNSLHTYSESPAAPREKPIRDLRKPGSPSLLLT. The ITIM motif motif lies at 5–10; sequence ITYAEV. The helical; Signal-anchor for type II membrane protein transmembrane segment at 49 to 69 threads the bilayer; the sequence is SLMLLLLLLAITFLVAFIIYF. Over 70 to 238 the chain is Extracellular; sequence QKYSQLLEEK…SVCQMKKINL (169 aa). Asparagine 91 carries an N-linked (GlcNAc...) asparagine glycan. Cysteine 107 and cysteine 118 form a disulfide bridge. Residues 126-233 form the C-type lectin domain; the sequence is SSASWNKSEE…SLKQKSVCQM (108 aa). 2 N-linked (GlcNAc...) asparagine glycosylation sites follow: asparagine 131 and asparagine 136. 2 disulfide bridges follow: cysteine 137/cysteine 231 and cysteine 205/cysteine 223. Residues valine 146, glutamate 152, glutamate 197, serine 199, and glutamate 203 each coordinate Ca(2+). Alpha-D-mannopyranose contacts are provided by residues 197 to 199 and glutamate 203; that span reads EPS. 209 to 211 is a binding site for N-acetyl-D-glucosamine; that stretch reads IYR. 2 residues coordinate Ca(2+): asparagine 219 and aspartate 220.

May interact with PTPN6 via its ITIM site. In terms of tissue distribution, expressed in splenic antigen-presenting cells including B-cells, monocytes/macrophages, and dendritic cells (at protein level). Expressed in spleen and lymph node and slightly increased with dendritic cell maturation.

The protein resides in the cell membrane. Its function is as follows. May be involved in regulating immune reactivity. May play a role in modulating dendritic cells (DC) differentiation and/or maturation. May be involved in the inhibition of B-cell-receptor-mediated calcium mobilization and protein tyrosine phosphorylation. In terms of biological role, C-type lectin receptor that binds carbohydrates mannose and fucose but also weakly interacts with N-acetylglucosamine (GlcNAc) in a Ca(2+)-dependent manner. Involved in regulating immune reactivity. Once triggered by antigen, it is internalized by clathrin-dependent endocytosis and delivers its antigenic cargo into the antigen presentation pathway resulting in cross-priming of CD8(+) T cells. This cross-presentation and cross-priming are enhanced by TLR7 and TLR8 agonists with increased expansion of the CD8(+) T cells, high production of IFNG and TNF with reduced levels of IL4, IL5 and IL13. In plasmacytoid dendritic cells, inhibits TLR9-mediated IFNA and TNF production. May be involved via its ITIM motif (immunoreceptor tyrosine-based inhibitory motifs) in the inhibition of B-cell-receptor-mediated calcium mobilization and protein tyrosine phosphorylation. This is C-type lectin domain family 4 member A (Clec4a) from Mus musculus (Mouse).